We begin with the raw amino-acid sequence, 310 residues long: tRNA methyltransferase 10 homolog B (310 aa).

The stretch at 55-94 (RKQRNWERRLEVKKSKRKEEKLRKKLNRQDKDVSDAQLSK) forms a coiled coil. An SAM-dependent MTase TRM10-type domain is found at 101 to 298 (TKERLEGARA…AGIPPGKGFV (198 aa)).

This sequence belongs to the class IV-like SAM-binding methyltransferase superfamily. TRM10 family.

It catalyses the reaction guanosine(9) in tRNA + S-adenosyl-L-methionine = N(1)-methylguanosine(9) in tRNA + S-adenosyl-L-homocysteine + H(+). S-adenosyl-L-methionine-dependent guanine N(1)-methyltransferase that catalyzes the formation of N(1)-methylguanine at position 9 (m1G9) in tRNAs. Probably not able to catalyze formation of N(1)-methyladenine at position 9 (m1A9) in tRNAs. The protein is tRNA methyltransferase 10 homolog B (trmt10b) of Danio rerio (Zebrafish).